The following is a 200-amino-acid chain: ATP-dependent Clp protease proteolytic subunit (200 aa).

Residue S103 is the Nucleophile of the active site. Residue H128 is part of the active site.

The protein belongs to the peptidase S14 family. Fourteen ClpP subunits assemble into 2 heptameric rings which stack back to back to give a disk-like structure with a central cavity, resembling the structure of eukaryotic proteasomes.

Its subcellular location is the cytoplasm. The enzyme catalyses Hydrolysis of proteins to small peptides in the presence of ATP and magnesium. alpha-casein is the usual test substrate. In the absence of ATP, only oligopeptides shorter than five residues are hydrolyzed (such as succinyl-Leu-Tyr-|-NHMec, and Leu-Tyr-Leu-|-Tyr-Trp, in which cleavage of the -Tyr-|-Leu- and -Tyr-|-Trp bonds also occurs).. Functionally, cleaves peptides in various proteins in a process that requires ATP hydrolysis. Has a chymotrypsin-like activity. Plays a major role in the degradation of misfolded proteins. This chain is ATP-dependent Clp protease proteolytic subunit, found in Vibrio vulnificus (strain CMCP6).